Here is a 502-residue protein sequence, read N- to C-terminus: Protein krueppel (502 aa).

Disordered stretches follow at residues 115–164 (PPQG…KLSV) and 178–202 (DMYH…THDG). Composition is skewed to low complexity over residues 119 to 136 (THLH…STPL) and 183 to 198 (SGGP…SPNS). 5 C2H2-type zinc fingers span residues 222-244 (FTCK…ERTH), 250-272 (FECP…MRLH), 278-300 (YHCS…LRVH), 306-328 (YTCE…MLVH), and 334-354 (FECE…NHKC). Disordered stretches follow at residues 399–427 (NESV…SVDG) and 445–502 (RLPP…HQQH). Positions 410 to 419 (EDDGPLDLSE) are enriched in acidic residues. Serine 468, serine 471, and serine 477 each carry phosphoserine. Residues 482–491 (DDIDLYDLDD) are compositionally biased toward acidic residues.

It belongs to the krueppel C2H2-type zinc-finger protein family.

The protein resides in the nucleus. Functionally, krueppel is a gap class segmentation protein. It is involved in the segmentation of the embryo and in the differentiation of the Malpighian tubules. This chain is Protein krueppel (Kr), found in Drosophila melanogaster (Fruit fly).